A 221-amino-acid chain; its full sequence is Iron-sulfur cluster repair protein YtfE (221 aa).

It belongs to the RIC family. YtfE subfamily. As to quaternary structure, homodimer.

It localises to the cytoplasm. In terms of biological role, di-iron-containing protein involved in the repair of iron-sulfur clusters damaged by oxidative and nitrosative stress conditions. In Yersinia pestis bv. Antiqua (strain Antiqua), this protein is Iron-sulfur cluster repair protein YtfE.